The chain runs to 288 residues: MPVPESQLERWSHQGATTTAKKTHESIRAALDRYKWPKGKPEVYLQGSYKNSTNIRGDSDVDVVVQLNSVFMNNLTAEQKRRFGFVKSDYTWNDFYSDVERALTDYYGASKVRRGRKTLKVETTYLPADVVVCIQYRKYPPNRKSEDDYIEGMTFYVPSEDRWVVNYPKLHYENGAAKNQQTNEWYKPTIRMFKNARTYLIEQGAPQDLAPSYFLECLLYNVPDSKFGGTFKDTFCSVINWLKRADLSKFRCQNGQDDLFGEFPEQWSEEKARRFLRYMDDLWTGWGQ.

The interval 1–23 (MPVPESQLERWSHQGATTTAKKT) is disordered. A UTP-binding site is contributed by glutamine 46. ATP is bound at residue 46 to 48 (QGS). Mg(2+) contacts are provided by aspartate 60 and aspartate 62. UTP-binding positions include aspartate 62 and 116-120 (RKTLK). Aspartate 129 is a Mg(2+) binding site. Asparagine 166 is a UTP binding site. Residues lysine 194, serine 212, and glutamate 265 each contribute to the ATP site.

The protein belongs to the CD-NTase family. E01 subfamily. Requires Mg(2+) as cofactor.

It catalyses the reaction UTP + ATP = 3',3'-cUAMP + 2 diphosphate. In terms of biological role, cyclic nucleotide synthase (second messenger synthase) of a CBASS antivirus system. CBASS (cyclic oligonucleotide-based antiphage signaling system) provides immunity against bacteriophage. The CD-NTase protein synthesizes cyclic nucleotides in response to infection; these serve as specific second messenger signals. The signals activate a diverse range of effectors, leading to bacterial cell death and thus abortive phage infection. A type I-B(UU) CBASS system. Cyclic dinucleotide synthase that catalyzes the synthesis of 3'3'-cyclic UMP-AMP (cUMP-AMP) from UTP and ATP, a second messenger for cell signal transduction. The chain is Cyclic UMP-AMP synthase from Rhodothermus marinus (strain SG0.5JP17-172).